The sequence spans 238 residues: Probable succinyl-CoA:3-ketoacid coenzyme A transferase subunit A (238 aa).

Residue 24-30 (GGFGLCG) participates in CoA binding.

This sequence belongs to the 3-oxoacid CoA-transferase subunit A family. Heterodimer of a subunit A and a subunit B.

The enzyme catalyses a 3-oxo acid + succinyl-CoA = a 3-oxoacyl-CoA + succinate. This is Probable succinyl-CoA:3-ketoacid coenzyme A transferase subunit A (scoA) from Bacillus subtilis (strain 168).